Here is a 367-residue protein sequence, read N- to C-terminus: Glutamate 5-kinase (367 aa).

Lys-10 provides a ligand contact to ATP. Substrate-binding residues include Ser-50, Asp-137, and Asn-149. ATP-binding positions include 169–170 and 211–217; these read TD and TGGMSTK. A PUA domain is found at 275–353; sequence AGEITVDEGA…QQIDAILGYE (79 aa).

Belongs to the glutamate 5-kinase family.

It is found in the cytoplasm. The catalysed reaction is L-glutamate + ATP = L-glutamyl 5-phosphate + ADP. Its pathway is amino-acid biosynthesis; L-proline biosynthesis; L-glutamate 5-semialdehyde from L-glutamate: step 1/2. Functionally, catalyzes the transfer of a phosphate group to glutamate to form L-glutamate 5-phosphate. This is Glutamate 5-kinase from Salmonella agona (strain SL483).